Here is a 480-residue protein sequence, read N- to C-terminus: Prostacyclin synthase (480 aa).

Residues 1–21 (MMWTALLLVGLSILVIVLYGR) traverse the membrane as a helical segment. Substrate is bound by residues Arg104, Leu110, Asn277, 338–339 (TR), and Arg362. Position 421 (Cys421) interacts with heme.

It belongs to the cytochrome P450 family. The cofactor is heme.

The protein localises to the endoplasmic reticulum membrane. It carries out the reaction prostaglandin H2 = prostaglandin I2. It catalyses the reaction a hydroperoxyeicosatetraenoate = an oxoeicosatetraenoate + H2O. The enzyme catalyses (15S)-hydroperoxy-(5Z,8Z,11Z,13E)-eicosatetraenoate = 15-oxo-(5Z,8Z,11Z,13E)-eicosatetraenoate + H2O. The catalysed reaction is (15S)-hydroperoxy-(5Z,8Z,11Z,13E)-eicosatetraenoate + AH2 = (15S)-hydroxy-(5Z,8Z,11Z,13E)-eicosatetraenoate + A + H2O. Functionally, catalyzes the isomerization of prostaglandin H2 to prostacyclin (= prostaglandin I2). Its function is as follows. Catalyzes the biosynthesis and metabolism of eicosanoids. Catalyzes the isomerization of prostaglandin H2 to prostacyclin (= prostaglandin I2), a potent mediator of vasodilation and inhibitor of platelet aggregation. Additionally, displays dehydratase activity, toward hydroperoxyeicosatetraenoates (HPETEs), especially toward (15S)-hydroperoxy-(5Z,8Z,11Z,13E)-eicosatetraenoate (15(S)-HPETE). The protein is Prostacyclin synthase of Danio rerio (Zebrafish).